A 659-amino-acid chain; its full sequence is Putative RING finger protein R311 (659 aa).

Residues 502–540 (CPVCYDDDYIKTKLICGHTVCLTCVLNILPNSKGCPLCM) form an RING-type zinc finger.

This is Putative RING finger protein R311 from Acanthamoeba polyphaga (Amoeba).